The chain runs to 202 residues: Coiled-coil domain-containing protein mdt-28 (202 aa).

Composition is skewed to acidic residues over residues 1-15 and 28-45; these read MFEE…EEQE and EDID…DDEY. The interval 1 to 83 is disordered; sequence MFEELDAEDG…NEDDEEPIEP (83 aa). Residues 159-184 adopt a coiled-coil conformation; it reads IEEENLDEAIERQETIIAAAREMLNS.

Interacts with mdt-6 and mdt-30. As to expression, ubiquitously expressed in tissues including epidermal, intestinal, pharyngeal and uterine, and is also expressed in vulval muscle cells and gut granules.

Its subcellular location is the nucleus. The protein localises to the cytoplasm. In terms of biological role, plays a role in normal growth and development. This is Coiled-coil domain-containing protein mdt-28 from Caenorhabditis elegans.